The sequence spans 132 residues: MAREFSRTQRVAQEMQKEIAIILQREVKDPRVGMATVSGVEVSRDLAYAKVFVTFLNDGEPETVKSGLKALQDASGFIRMLLGKAMRLRVVPELTFAYDASLVEGMRMSNLVSNVVKDDAARRSAADRDEEA.

The protein belongs to the RbfA family. As to quaternary structure, monomer. Binds 30S ribosomal subunits, but not 50S ribosomal subunits or 70S ribosomes.

It is found in the cytoplasm. Its function is as follows. One of several proteins that assist in the late maturation steps of the functional core of the 30S ribosomal subunit. Associates with free 30S ribosomal subunits (but not with 30S subunits that are part of 70S ribosomes or polysomes). Required for efficient processing of 16S rRNA. May interact with the 5'-terminal helix region of 16S rRNA. The polypeptide is Ribosome-binding factor A (Edwardsiella ictaluri (strain 93-146)).